Here is a 362-residue protein sequence, read N- to C-terminus: MEIIKLDHITKQYDDGFVALKDINLELESGKFYSLLGPSGSGKTTILRIIAGFTEASAGKVYFDGQDITNLDASKRHINTVFQNYALFPHLNVYENVAFALKLRQRPESEIREKVKDALHTVRLDGYANREIFELSGGQQQRVAIARAIINEPKVLLLDECLSALDKRLRKEMQFELRAIQKKLGITFIFVTHDQEEALAMSDEIFVLNDGEIKQSGSPVDIYDEPVNDFVARFIGDSNILSGRMIRDFAVEFAGKDFECADAGITPGEKVEVVLRPEDLDITTPAAGKLLVTVQSQLFLGDHFEIKAIGQDGFEWLIHSTNGVQIGQEVGIFFDPEDIHVMRLGETEEEFDARLETYEGED.

The ABC transporter domain occupies 4-235 (IKLDHITKQY…PVNDFVARFI (232 aa)). 37 to 44 (GPSGSGKT) is an ATP binding site.

This sequence belongs to the ABC transporter superfamily. Spermidine/putrescine importer (TC 3.A.1.11.1) family. The complex is composed of two ATP-binding proteins (PotA), two transmembrane proteins (PotB and PotC) and a solute-binding protein (PotD).

Its subcellular location is the cell membrane. The catalysed reaction is ATP + H2O + polyamine-[polyamine-binding protein]Side 1 = ADP + phosphate + polyamineSide 2 + [polyamine-binding protein]Side 1.. Its function is as follows. Part of the ABC transporter complex PotABCD involved in spermidine/putrescine import. Responsible for energy coupling to the transport system. This chain is Spermidine/putrescine import ATP-binding protein PotA, found in Lactobacillus delbrueckii subsp. bulgaricus (strain ATCC BAA-365 / Lb-18).